Consider the following 125-residue polypeptide: UPF0102 protein Mpop_0474 (125 aa).

This sequence belongs to the UPF0102 family.

The sequence is that of UPF0102 protein Mpop_0474 from Methylorubrum populi (strain ATCC BAA-705 / NCIMB 13946 / BJ001) (Methylobacterium populi).